The chain runs to 160 residues: Flavodoxin (160 aa).

A Flavodoxin-like domain is found at 3-153; it reads ISILYSSKTG…NARIFGERIA (151 aa).

The protein belongs to the flavodoxin family. It depends on FMN as a cofactor.

Low-potential electron donor to a number of redox enzymes. The polypeptide is Flavodoxin (floX) (Clostridium saccharobutylicum).